The primary structure comprises 511 residues: Coatomer subunit delta (511 aa).

Residues 168–177 (QARRDAERQG) are compositionally biased toward basic and acidic residues. The disordered stretch occupies residues 168–196 (QARRDAERQGKKAPGFGGFGSSTVSGGST). The residue at position 223 (serine 223) is a Phosphoserine. 2 positions are modified to N6-acetyllysine: lysine 233 and lysine 241. Serine 244 bears the Phosphoserine mark. An MHD domain is found at 271 to 511 (MESVHMKIEE…TFLVDKYEIL (241 aa)). 2 positions are modified to N6-acetyllysine: lysine 309 and lysine 351. At serine 493 the chain carries Phosphoserine.

Belongs to the adaptor complexes medium subunit family. Delta-COP subfamily. Oligomeric complex that consists of at least the alpha, beta, beta', gamma, delta, epsilon and zeta subunits. Ubiquitously expressed.

Its subcellular location is the cytoplasm. The protein localises to the golgi apparatus membrane. It localises to the cytoplasmic vesicle. It is found in the COPI-coated vesicle membrane. The coatomer is a cytosolic protein complex that binds to dilysine motifs and reversibly associates with Golgi non-clathrin-coated vesicles, which further mediate biosynthetic protein transport from the ER, via the Golgi up to the trans Golgi network. Coatomer complex is required for budding from Golgi membranes, and is essential for the retrograde Golgi-to-ER transport of dilysine-tagged proteins. In mammals, the coatomer can only be recruited by membranes associated to ADP-ribosylation factors (ARFs), which are small GTP-binding proteins; the complex also influences the Golgi structural integrity, as well as the processing, activity, and endocytic recycling of LDL receptors. This is Coatomer subunit delta (ARCN1) from Bos taurus (Bovine).